A 130-amino-acid chain; its full sequence is Small ribosomal subunit protein uS9 (130 aa).

The segment at 109-130 is disordered; that stretch reads RMKERRKYGLKKARKAPQFSKR. A compositionally biased stretch (basic residues) spans 111–130; it reads KERRKYGLKKARKAPQFSKR.

Belongs to the universal ribosomal protein uS9 family.

This is Small ribosomal subunit protein uS9 from Caldanaerobacter subterraneus subsp. tengcongensis (strain DSM 15242 / JCM 11007 / NBRC 100824 / MB4) (Thermoanaerobacter tengcongensis).